A 318-amino-acid chain; its full sequence is Small ribosomal subunit protein mS26 (318 aa).

Residues 295–318 (IDSKLNPTSNGAGNNGNNNNTTNL) form a disordered region. Low complexity predominate over residues 300 to 318 (NPTSNGAGNNGNNNNTTNL).

This sequence belongs to the mitochondrion-specific ribosomal protein mS26 family. As to quaternary structure, component of the mitochondrial small ribosomal subunit (mt-SSU). Mature yeast 74S mitochondrial ribosomes consist of a small (37S) and a large (54S) subunit. The 37S small subunit contains a 15S ribosomal RNA (15S mt-rRNA) and 34 different proteins. The 54S large subunit contains a 21S rRNA (21S mt-rRNA) and 46 different proteins.

The protein localises to the mitochondrion. In terms of biological role, component of the mitochondrial ribosome (mitoribosome), a dedicated translation machinery responsible for the synthesis of mitochondrial genome-encoded proteins, including at least some of the essential transmembrane subunits of the mitochondrial respiratory chain. The mitoribosomes are attached to the mitochondrial inner membrane and translation products are cotranslationally integrated into the membrane. The chain is Small ribosomal subunit protein mS26 (PET123) from Saccharomyces cerevisiae (strain ATCC 204508 / S288c) (Baker's yeast).